A 289-amino-acid chain; its full sequence is Iodotyrosine deiodinase 1 (289 aa).

Residues 1 to 21 (MFLLTPVLVAVVCILMVWIFK) form a helical membrane-spanning segment. FMN contacts are provided by residues 100–104 (RRSVR) and 128–129 (SG). 3,5-diiodo-L-tyrosine contacts are provided by Ala-130, Glu-157, Tyr-161, and Lys-182. 4 residues coordinate 3-iodo-L-tyrosine: Ala-130, Glu-157, Tyr-161, and Lys-182. FMN is bound by residues 237 to 239 (TTT) and Arg-279.

Belongs to the nitroreductase family. In terms of assembly, homodimer. It depends on FMN as a cofactor. As to expression, detected in thyroid (at protein level).

It localises to the cell membrane. Its subcellular location is the cytoplasmic vesicle membrane. It carries out the reaction 2 iodide + L-tyrosine + 2 NADP(+) = 3,5-diiodo-L-tyrosine + 2 NADPH + H(+). It catalyses the reaction iodide + L-tyrosine + NADP(+) = 3-iodo-L-tyrosine + NADPH. The enzyme catalyses 3-iodo-L-tyrosine + iodide + NADP(+) = 3,5-diiodo-L-tyrosine + NADPH + H(+). The catalysed reaction is L-tyrosine + chloride + NADP(+) = 3-chloro-L-tyrosine + NADPH. It carries out the reaction bromide + L-tyrosine + NADP(+) = 3-bromo-L-tyrosine + NADPH. Functionally, catalyzes the dehalogenation of halotyrosines such as 3-bromo-L-tyrosine, 3-chloro-L-tyrosine, 3-iodo-L-tyrosine and 3,5-diiodo-L-tyrosine. During thyroid hormone biosynthesis, facilitates iodide salvage by catalysing the oxidative NADPH-dependent deiodination of the halogenated by-products of thyroid hormone production, monoiodotyrosine (L-MIT) and diiodotyrosine (L-DIT). The scavanged iodide can then reenter the hormone-producing pathways. Acts more efficiently on 3-iodo-L-tyrosine than 3,5-diiodo-L-tyrosine. This chain is Iodotyrosine deiodinase 1 (IYD), found in Sus scrofa (Pig).